A 301-amino-acid chain; its full sequence is MLAVAFVGATGTGKSLLSLDAARDFNGHIVNADSMQLYRDMDIGTAKLSHSARQGIPHHQIDVIDPSSEASVARYKLSAQTCIKHIHALNSIPFLVGGSGLYVSSVVHNLQFPPTDGRVRKLLEDEADKSGIGVLHDRLLKLHPGFTVSRGNRRRIIRALEVAYITGRSPNPVLPLQNRANNFIVINLICDKGTLDIRLQKRVESFYDNGLIDEVRLLQEKYVLGRTAAKAIGYKQAIMYLAGEISCADAKDSTLQETIRLANKQIKWFRRYSGQHIVDTTDMSVAYEQIRSILNKSFRIS.

Residue 8–15 coordinates ATP; it reads GATGTGKS. 10–15 lines the substrate pocket; the sequence is TGTGKS. Residues 33-36 form an interaction with substrate tRNA region; it reads DSMQ.

It belongs to the IPP transferase family. In terms of assembly, monomer. Requires Mg(2+) as cofactor.

It catalyses the reaction adenosine(37) in tRNA + dimethylallyl diphosphate = N(6)-dimethylallyladenosine(37) in tRNA + diphosphate. In terms of biological role, catalyzes the transfer of a dimethylallyl group onto the adenine at position 37 in tRNAs that read codons beginning with uridine, leading to the formation of N6-(dimethylallyl)adenosine (i(6)A). The chain is tRNA dimethylallyltransferase from Tropheryma whipplei (strain Twist) (Whipple's bacillus).